Consider the following 331-residue polypeptide: 5-dehydro-2-deoxygluconokinase (331 aa).

It belongs to the carbohydrate kinase PfkB family.

It carries out the reaction 5-dehydro-2-deoxy-D-gluconate + ATP = 6-phospho-5-dehydro-2-deoxy-D-gluconate + ADP + H(+). Its pathway is polyol metabolism; myo-inositol degradation into acetyl-CoA; acetyl-CoA from myo-inositol: step 5/7. In terms of biological role, catalyzes the phosphorylation of 5-dehydro-2-deoxy-D-gluconate (2-deoxy-5-keto-D-gluconate or DKG) to 6-phospho-5-dehydro-2-deoxy-D-gluconate (DKGP). In Photobacterium profundum (strain SS9), this protein is 5-dehydro-2-deoxygluconokinase.